We begin with the raw amino-acid sequence, 634 residues long: DNA mismatch repair protein MutL (634 aa).

Positions 406-427 are disordered; sequence HTHHNDTKGSVHTKSFSARSSS.

Belongs to the DNA mismatch repair MutL/HexB family.

In terms of biological role, this protein is involved in the repair of mismatches in DNA. It is required for dam-dependent methyl-directed DNA mismatch repair. May act as a 'molecular matchmaker', a protein that promotes the formation of a stable complex between two or more DNA-binding proteins in an ATP-dependent manner without itself being part of a final effector complex. The protein is DNA mismatch repair protein MutL of Anaplasma phagocytophilum (strain HZ).